The following is a 123-amino-acid chain: Small ribosomal subunit protein uS12c (123 aa).

It belongs to the universal ribosomal protein uS12 family. Part of the 30S ribosomal subunit.

The protein resides in the plastid. It is found in the chloroplast. With S4 and S5 plays an important role in translational accuracy. Located at the interface of the 30S and 50S subunits. In Chara vulgaris (Common stonewort), this protein is Small ribosomal subunit protein uS12c (rps12).